A 580-amino-acid polypeptide reads, in one-letter code: Protein O-linked-mannose beta-1,4-N-acetylglucosaminyltransferase 2 (580 aa).

The Cytoplasmic segment spans residues 1 to 4 (MHLS). A helical; Signal-anchor for type II membrane protein membrane pass occupies residues 5 to 25 (AVFNALLVSVLAAVLWKHVRL). Residues 26–580 (REHAATLEEE…PFADVLVCNT (555 aa)) lie on the Lumenal side of the membrane. N99 and N276 each carry an N-linked (GlcNAc...) asparagine glycan. A Fibronectin type-III domain is found at 488–580 (ARCQASVHGA…PFADVLVCNT (93 aa)).

Belongs to the glycosyltransferase 61 family.

It is found in the endoplasmic reticulum membrane. It catalyses the reaction 3-O-(alpha-D-mannosyl)-L-threonyl-[protein] + UDP-N-acetyl-alpha-D-glucosamine = 3-O-(N-acetyl-beta-D-glucosaminyl-(1-&gt;4)-alpha-D-mannosyl)-L-threonyl-[protein] + UDP + H(+). The protein operates within protein modification; protein glycosylation. In terms of biological role, O-linked mannose beta-1,4-N-acetylglucosaminyltransferase that transfers UDP-N-acetyl-D-glucosamine to the 4-position of the mannose to generate N-acetyl-D-glucosamine-beta-1,4-O-D-mannosylprotein. Involved in the biosynthesis of the phosphorylated O-mannosyl trisaccharide (N-acetylgalactosamine-beta-3-N-acetylglucosamine-beta-4-(phosphate-6-)mannose), a carbohydrate structure present in alpha-dystroglycan (DAG1), which is required for binding laminin G-like domain-containing extracellular proteins with high affinity. The chain is Protein O-linked-mannose beta-1,4-N-acetylglucosaminyltransferase 2 (POMGNT2) from Pan troglodytes (Chimpanzee).